A 227-amino-acid chain; its full sequence is ATP-dependent dethiobiotin synthetase BioD (227 aa).

13 to 18 lines the ATP pocket; sequence DVGKTV. Position 17 (Thr-17) interacts with Mg(2+). Lys-38 is an active-site residue. Residues Asp-55, 116–119, and 176–177 each bind ATP; these read EGAG and NR. The Mg(2+) site is built by Asp-55 and Glu-116.

This sequence belongs to the dethiobiotin synthetase family. As to quaternary structure, homodimer. It depends on Mg(2+) as a cofactor.

It localises to the cytoplasm. The enzyme catalyses (7R,8S)-7,8-diammoniononanoate + CO2 + ATP = (4R,5S)-dethiobiotin + ADP + phosphate + 3 H(+). It participates in cofactor biosynthesis; biotin biosynthesis; biotin from 7,8-diaminononanoate: step 1/2. Catalyzes a mechanistically unusual reaction, the ATP-dependent insertion of CO2 between the N7 and N8 nitrogen atoms of 7,8-diaminopelargonic acid (DAPA, also called 7,8-diammoniononanoate) to form a ureido ring. This is ATP-dependent dethiobiotin synthetase BioD from Aliivibrio salmonicida (strain LFI1238) (Vibrio salmonicida (strain LFI1238)).